The primary structure comprises 480 residues: O-acyltransferase ausP (480 aa).

Active-site proton acceptor residues include His180 and Asp412.

The protein belongs to the plant acyltransferase family. As to quaternary structure, monomer.

Its pathway is secondary metabolite biosynthesis; terpenoid biosynthesis. O-acyltransferase; part of the gene cluster that mediates the biosynthesis of calidodehydroaustin, a fungal meroterpenoid. The first step of the pathway is the synthesis of 3,5-dimethylorsellinic acid by the polyketide synthase ausA. 3,5-dimethylorsellinic acid is then prenylated by the polyprenyl transferase ausN. Further epoxidation by the FAD-dependent monooxygenase ausM and cyclization by the probable terpene cyclase ausL lead to the formation of protoaustinoid A. Protoaustinoid A is then oxidized to spiro-lactone preaustinoid A3 by the combined action of the FAD-binding monooxygenases ausB and ausC, and the dioxygenase ausE. Acid-catalyzed keto-rearrangement and ring contraction of the tetraketide portion of preaustinoid A3 by ausJ lead to the formation of preaustinoid A4. The aldo-keto reductase ausK, with the help of ausH, is involved in the next step by transforming preaustinoid A4 into isoaustinone which is in turn hydroxylated by the P450 monooxygenase ausI to form austinolide. The cytochrome P450 monooxygenase ausG modifies austinolide to austinol. Austinol is further acetylated to austin by the O-acetyltransferase ausP, which spontaneously changes to dehydroaustin. The cytochrome P450 monooxygenase ausR then converts dehydroaustin is into 7-dehydrodehydroaustin. The hydroxylation catalyzed by ausR permits the O-acetyltransferase ausQ to add an additional acetyl group to the molecule, leading to the formation of acetoxydehydroaustin. The short chain dehydrogenase ausT catalyzes the reduction of the double bond present between carbon atoms 1 and 2 to convert 7-dehydrodehydroaustin into 1,2-dihydro-7-hydroxydehydroaustin. AusQ catalyzes not only an acetylation reaction but also the addition of the PKS ausV diketide product to 1,2-dihydro-7-hydroxydehydroaustin, forming precalidodehydroaustin. Finally, the iron/alpha-ketoglutarate-dependent dioxygenase converts precalidodehydroaustin into calidodehydroaustin. This Aspergillus calidoustus protein is O-acyltransferase ausP.